We begin with the raw amino-acid sequence, 502 residues long: Ubiquitin-associated protein 1 (502 aa).

The interaction with ESCRT-I stretch occupies residues 1 to 95 (MASKKLGADF…AEAKVNSKSG (95 aa)). The region spanning 17 to 63 (LDDVPFKTGDKFKTPAKVGLPIGFSLPDCLQVVREVQYDFSLEKKTI) is the UMA domain. The segment covering 86-100 (AEAKVNSKSGPEGDS) has biased composition (basic and acidic residues). A disordered region spans residues 86–117 (AEAKVNSKSGPEGDSKMSFSKTHSTATMPPPI). Residues 102–112 (MSFSKTHSTAT) show a composition bias toward polar residues. 3 positions are modified to phosphoserine: serine 146, serine 205, and serine 289. An interaction with PTPN23 region spans residues 260–290 (VSNIKSLSFPKLDSDDSNQKTAKLASTFHST). UBA domains follow at residues 389-430 (SPSE…LFAH) and 451-498 (QCSE…LMAR).

Component of an ESCRT-I complex (endosomal sorting complex required for transport I) which consists of TSG101, VPS28, VPS37A and UBAP1 in a 1:1:1:1 stoichiometry. Interacts with PTPN23. Interacts (via UBA domains) with ubiquitinated proteins. In terms of tissue distribution, ubiquitous. Highly expressed in heart, brain, placenta, lung, liver, skeletal muscle and pancreas.

It is found in the cytoplasm. Its subcellular location is the cytosol. The protein localises to the endosome. Functionally, component of the ESCRT-I complex, a regulator of vesicular trafficking process. Binds to ubiquitinated cargo proteins and is required for the sorting of endocytic ubiquitinated cargos into multivesicular bodies (MVBs). Plays a role in the proteasomal degradation of ubiquitinated cell-surface proteins, such as EGFR and BST2. This is Ubiquitin-associated protein 1 from Homo sapiens (Human).